The sequence spans 242 residues: Probable inactive serine protease 58 (242 aa).

The N-terminal stretch at 1-17 is a signal peptide; sequence MNLILLWALLNLPVALT. Positions 18–240 constitute a Peptidase S1 domain; that stretch reads FDPNYKDDIT…YIPWIENTIQ (223 aa). Cystine bridges form between Cys41-Cys57, Cys134-Cys202, Cys166-Cys181, and Cys192-Cys216. The N-linked (GlcNAc...) asparagine glycan is linked to Asn157.

The protein belongs to the peptidase S1 family.

The protein resides in the secreted. The sequence is that of Probable inactive serine protease 58 (PRSS58) from Bos taurus (Bovine).